A 278-amino-acid polypeptide reads, in one-letter code: Adenylate kinase (278 aa).

50 to 55 (GAGKGT) lines the ATP pocket. An NMP region spans residues 70-99 (ATGDMLRAQVAKGTALGKQAKKIMNEGGLV). Residues Thr-71, Arg-76, 97–99 (GLV), 126–129 (GFPR), and Gln-133 contribute to the AMP site. The segment at 167–204 (GRLVHPASGRSYHRIFNPPKDDMKDDITGEPLVQRSDD) is LID. Residues Arg-168 and 177–178 (SY) each bind ATP. Residues Arg-201 and Arg-212 each coordinate AMP. Residue Gln-240 participates in ATP binding.

Belongs to the adenylate kinase family. AK2 subfamily. Monomer.

It is found in the cytoplasm. It localises to the cytosol. Its subcellular location is the mitochondrion intermembrane space. It catalyses the reaction AMP + ATP = 2 ADP. Functionally, catalyzes the reversible transfer of the terminal phosphate group between ATP and AMP. Plays an important role in cellular energy homeostasis and in adenine nucleotide metabolism. Adenylate kinase activity is critical for regulation of the phosphate utilization and the AMP de novo biosynthesis pathways. This is Adenylate kinase (adk-1) from Neurospora crassa (strain ATCC 24698 / 74-OR23-1A / CBS 708.71 / DSM 1257 / FGSC 987).